The chain runs to 425 residues: Pleckstrin homology domain-containing family A member 2 (425 aa).

In terms of domain architecture, PH 1 spans 7 to 113 (QNRICGFLDI…WVEALNQASK (107 aa)). Residue lysine 141 forms a Glycyl lysine isopeptide (Lys-Gly) (interchain with G-Cter in SUMO2) linkage. Serine 184 is subject to Phosphoserine. The PH 2 domain occupies 198–298 (PLIKSGYCVK…WIKEIGAAVQ (101 aa)). The span at 312 to 330 (SISLTRPGSSSLSSGPNSI) shows a compositional bias: low complexity. The tract at residues 312–332 (SISLTRPGSSSLSSGPNSILC) is disordered. Residues serine 314 and serine 349 each carry the phosphoserine modification. The interval 352-425 (SSWQPWTPVP…DDENIRTSDV (74 aa)) is disordered. The span at 400–410 (RSEPQHPKEKP) shows a compositional bias: basic and acidic residues.

Binds MPDZ and PTPN13. In terms of tissue distribution, highly expressed in heart, kidney, spleen and peripheral blood leukocytes. Detected at lower levels in brain, skeletal muscle, colon, thymus, liver, small intestine, placenta and lung.

The protein localises to the cytoplasm. The protein resides in the cell membrane. Its subcellular location is the nucleus. Functionally, binds specifically to phosphatidylinositol 3,4-diphosphate (PtdIns3,4P2), but not to other phosphoinositides. May recruit other proteins to the plasma membrane. This Homo sapiens (Human) protein is Pleckstrin homology domain-containing family A member 2 (PLEKHA2).